A 269-amino-acid chain; its full sequence is Zinc finger protein SNAI2 (269 aa).

An SNAG domain region spans residues 1–20; that stretch reads MPRSFLVKKHFNASKKPNYS. The interval 81–117 is disordered; that stretch reads SSSLGRVSPPPSSDTSSKDHSGSESPISDEEERLQPK. C2H2-type zinc fingers lie at residues 129–151, 160–182, 186–208, and 214–236; these read FQCN…KQLH, FSCK…IRTH, CVCK…IRTH, and FSCP…LQTH. A C2H2-type 5; atypical zinc finger spans residues 242–265; that stretch reads YQCKNCSKTFSRMSLLHKHEESGC.

This sequence belongs to the snail C2H2-type zinc-finger protein family. As to quaternary structure, interacts (via SNAG domain) with LIMD1 (via LIM domains), WTIP (via LIM domains) and AJUBA (via LIM domains). Interacts (via zinc fingers) with KPNA2, KPNB1, and TNPO1. May interact (via zinc fingers) with IPO7. Phosphorylated by GSK3B. Once phosphorylated, it becomes a target for ubiquitination. In terms of processing, ubiquitinated by the SCF(FBXO11) complex; ubiquitination requires previous GSK3B-mediated SNAI2 phosphorylation.

The protein localises to the nucleus. Its subcellular location is the cytoplasm. Transcriptional repressor that modulates both activator-dependent and basal transcription. Involved in the generation and migration of neural crest cells. Plays a role in mediating RAF1-induced transcriptional repression of the TJ protein, occludin (OCLN) and subsequent oncogenic transformation of epithelial cells. Represses BRCA2 expression by binding to its E2-box-containing silencer and recruiting CTBP1 and HDAC1 in breast cells. In epidermal keratinocytes, binds to the E-box in ITGA3 promoter and represses its transcription. Involved in the regulation of ITGB1 and ITGB4 expression and cell adhesion and proliferation in epidermal keratinocytes. Binds to E-box2 domain of BSG and activates its expression during TGFB1-induced epithelial-mesenchymal transition (EMT) in hepatocytes. Represses E-Cadherin/CDH1 transcription via E-box elements. Involved in osteoblast maturation. Binds to RUNX2 and SOC9 promoters and may act as a positive and negative transcription regulator, respectively, in osteoblasts. Binds to CXCL12 promoter via E-box regions in mesenchymal stem cells and osteoblasts. Plays an essential role in TWIST1-induced EMT and its ability to promote invasion and metastasis. The protein is Zinc finger protein SNAI2 (Snai2) of Mus musculus (Mouse).